A 456-amino-acid chain; its full sequence is Alcohol acyltransferase 17 (456 aa).

Catalysis depends on proton acceptor residues histidine 166 and aspartate 382.

The protein belongs to the plant acyltransferase family. Expressed in fruit.

Functionally, involved in the biosynthesis of volatile esters which confer kiwifruit flavor. Alcohol acyl transferase that can use a wide range of alcohols as substrate to produce esters. This chain is Alcohol acyltransferase 17, found in Actinidia deliciosa (Kiwi).